The following is a 156-amino-acid chain: Cytochrome c-type biogenesis protein CcmE 2 (156 aa).

Over 1-8 (MNPQRRRR) the chain is Cytoplasmic. Residues 9–29 (LWWVLALLLAGGLATTLVSMA) form a helical; Signal-anchor for type II membrane protein membrane-spanning segment. The Periplasmic segment spans residues 30–156 (LQRNVAYLYT…AAANQGGALR (127 aa)). His123 and Tyr127 together coordinate heme. The disordered stretch occupies residues 135–156 (KMGSAHRKHDVPAAANQGGALR).

It belongs to the CcmE/CycJ family.

The protein resides in the cell inner membrane. Its function is as follows. Heme chaperone required for the biogenesis of c-type cytochromes. Transiently binds heme delivered by CcmC and transfers the heme to apo-cytochromes in a process facilitated by CcmF and CcmH. This Xanthomonas oryzae pv. oryzae (strain MAFF 311018) protein is Cytochrome c-type biogenesis protein CcmE 2.